A 505-amino-acid chain; its full sequence is Sodium-coupled neutral amino acid transporter 3 (505 aa).

Residues 27–48 (VPTTDTQRTEDTQHCGEGKGFL) are disordered. Residues 33-43 (QRTEDTQHCGE) show a composition bias toward basic and acidic residues. N-linked (GlcNAc...) asparagine glycosylation is present at Asn73. A run of 5 helical transmembrane segments spans residues 82–102 (GILG…LFLL), 105–125 (VALL…IVGI), 143–163 (AAAL…LYII), 186–206 (MDGN…LALM), and 212–232 (LGYS…AVIY). A disulfide bridge links Cys239 with Cys276. N-linked (GlcNAc...) asparagine glycans are attached at residues Asn247 and Asn251. Residues 288–308 (AYTIPIMAFAFVCHPEVLPIY) form a helical membrane-spanning segment. N-linked (GlcNAc...) asparagine glycosylation is present at Asn324. 5 consecutive transmembrane segments (helical) span residues 325–345 (LSIA…YLTF), 367–387 (ILCV…IVLF), 409–429 (VLIA…APNI), 432–452 (IFGI…PAIF), and 472–492 (ALCF…FIII).

This sequence belongs to the amino acid/polyamine transporter 2 family. As to expression, expressed predominantly in liver, moderately expressed in kidney and brain, and barely detectable in heart and muscle. Within liver, expressed in hepatocytes. Not detected in testis. Expressed in cells of the ganglion cell layer, in soma of some cells of the inner nuclear layer (at protein level). Expressed in the inner segments of photoreceptor cells.

It is found in the cell membrane. It localises to the basolateral cell membrane. It carries out the reaction L-histidine(out) + Na(+)(out) + H(+)(in) = L-histidine(in) + Na(+)(in) + H(+)(out). The enzyme catalyses L-glutamine(out) + Na(+)(out) + H(+)(in) = L-glutamine(in) + Na(+)(in) + H(+)(out). It catalyses the reaction L-asparagine(out) + Na(+)(out) + H(+)(in) = L-asparagine(in) + Na(+)(in) + H(+)(out). Symporter that cotransports specific neutral amino acids and sodium ions, coupled to an H(+) antiporter activity. Mainly participates in the glutamate-GABA-glutamine cycle in brain where it transports L-glutamine from astrocytes in the intercellular space for the replenishment of both neurotransmitters glutamate and gamma-aminobutyric acid (GABA) in neurons and also functions as the major influx transporter in ganglion cells mediating the uptake of glutamine. The transport activity is specific for L-glutamine, L-histidine and L-asparagine. The transport is electroneutral coupled to the cotransport of 1 Na(+) and the antiport of 1 H(+). The transport is pH dependent, saturable, Li(+) tolerant and functions in both direction depending on the concentration gradients of its substrates and cotransported ions. Also mediates an amino acid-gated H(+) conductance that is not stoichiometrically coupled to the amino acid transport but which influences the ionic gradients that drive the amino acid transport. In addition, may play a role in nitrogen metabolism, amino acid homeostasis, glucose metabolism and renal ammoniagenesis. The sequence is that of Sodium-coupled neutral amino acid transporter 3 from Mus musculus (Mouse).